Reading from the N-terminus, the 199-residue chain is RNA-free ribonuclease P (199 aa).

It belongs to the HARP family.

The catalysed reaction is Endonucleolytic cleavage of RNA, removing 5'-extranucleotides from tRNA precursor.. RNA-free RNase P that catalyzes the removal of the 5'-leader sequence from pre-tRNA to produce the mature 5'-terminus. The polypeptide is RNA-free ribonuclease P (Pyrococcus furiosus (strain ATCC 43587 / DSM 3638 / JCM 8422 / Vc1)).